The sequence spans 429 residues: Glutamate-1-semialdehyde 2,1-aminomutase (429 aa).

Lys265 carries the N6-(pyridoxal phosphate)lysine modification.

The protein belongs to the class-III pyridoxal-phosphate-dependent aminotransferase family. HemL subfamily. As to quaternary structure, homodimer. Requires pyridoxal 5'-phosphate as cofactor.

The protein localises to the cytoplasm. It carries out the reaction (S)-4-amino-5-oxopentanoate = 5-aminolevulinate. It participates in porphyrin-containing compound metabolism; protoporphyrin-IX biosynthesis; 5-aminolevulinate from L-glutamyl-tRNA(Glu): step 2/2. The sequence is that of Glutamate-1-semialdehyde 2,1-aminomutase from Alkalilimnicola ehrlichii (strain ATCC BAA-1101 / DSM 17681 / MLHE-1).